The following is a 269-amino-acid chain: Cytochrome c oxidase subunit 3 (269 aa).

At 1–22 the chain is on the mitochondrial matrix side; that stretch reads MTHLERSRHQQHPFHMVMPSPW. The chain crosses the membrane as a helical span at residues 23–41; it reads PIVVSFALLSLALSTALTM. Residues 42–48 lie on the Mitochondrial intermembrane side of the membrane; the sequence is HGYIGNM. The chain crosses the membrane as a helical span at residues 49-73; it reads NMVYLALFVLLTSSILWFRDIVAEA. Residues 74–80 are Mitochondrial matrix-facing; the sequence is TYLGDHT. A helical transmembrane segment spans residues 81–114; it reads MAVRKGINLGFLMFVLSEVLIFAGLFWAYFHSAM. The Mitochondrial intermembrane portion of the chain corresponds to 115 to 137; sequence SPDVTLGACWPPVGIEAVQPTEL. The helical transmembrane segment at 138–161 threads the bilayer; that stretch reads PLLNTIILLSSGATVTYSHHALIA. Residues 162–164 lie on the Mitochondrial matrix side of the membrane; the sequence is GNR. Residues 165–188 form a helical membrane-spanning segment; it reads NKALSGLLITFWLIVIFVTCQYIE. Residues 189-201 lie on the Mitochondrial intermembrane side of the membrane; that stretch reads YTNAAFTISDGVY. A helical membrane pass occupies residues 202–230; the sequence is GSVFYAGTGLHFLHMVMLAAMLGVNYWRM. The Mitochondrial matrix segment spans residues 231–248; that stretch reads RNYHLTAGHHVGYETTII. Residues 249–265 traverse the membrane as a helical segment; the sequence is YTHVLDVIWLFLYVVFY. The Mitochondrial intermembrane portion of the chain corresponds to 266–269; the sequence is WWGV.

Belongs to the cytochrome c oxidase subunit 3 family. Component of the cytochrome c oxidase (complex IV, CIV), a multisubunit enzyme composed of 12 subunits. The complex is composed of a catalytic core of 3 subunits COX1, COX2 and COX3, encoded in the mitochondrial DNA, and 9 supernumerary subunits COX4, COX5A (or COX5B), COX6, COX7, COX8, COX9, COX12, COX13 and COX26, which are encoded in the nuclear genome. The complex exists as a monomer or a dimer and forms supercomplexes (SCs) in the inner mitochondrial membrane with a dimer of ubiquinol-cytochrome c oxidoreductase (cytochrome b-c1 complex, complex III, CIII), resulting in 2 different assemblies (supercomplexes III(2)IV and III(2)IV(2)). The N-terminus is blocked.

The protein localises to the mitochondrion inner membrane. The catalysed reaction is 4 Fe(II)-[cytochrome c] + O2 + 8 H(+)(in) = 4 Fe(III)-[cytochrome c] + 2 H2O + 4 H(+)(out). Its function is as follows. Component of the cytochrome c oxidase, the last enzyme in the mitochondrial electron transport chain which drives oxidative phosphorylation. The respiratory chain contains 3 multisubunit complexes succinate dehydrogenase (complex II, CII), ubiquinol-cytochrome c oxidoreductase (cytochrome b-c1 complex, complex III, CIII) and cytochrome c oxidase (complex IV, CIV), that cooperate to transfer electrons derived from NADH and succinate to molecular oxygen, creating an electrochemical gradient over the inner membrane that drives transmembrane transport and the ATP synthase. Cytochrome c oxidase is the component of the respiratory chain that catalyzes the reduction of oxygen to water. Electrons originating from reduced cytochrome c in the intermembrane space (IMS) are transferred via the dinuclear copper A center (CU(A)) of COX2 and heme A of COX1 to the active site in COX1, a binuclear center (BNC) formed by heme A3 and copper B (CU(B)). The BNC reduces molecular oxygen to 2 water molecules using 4 electrons from cytochrome c in the IMS and 4 protons from the mitochondrial matrix. COX3 is a catalytic core subunit. The sequence is that of Cytochrome c oxidase subunit 3 (COX3) from Saccharomyces cerevisiae (strain ATCC 204508 / S288c) (Baker's yeast).